Here is a 973-residue protein sequence, read N- to C-terminus: ATP-dependent DNA helicase Q5 (973 aa).

In terms of domain architecture, Helicase ATP-binding spans 39–213 (MAVVKGDKDV…FAALHLKQPV (175 aa)). 52 to 59 (MPTGAGKS) contacts ATP. The DEAH box motif lies at 157-160 (DEAH). Residues 241–398 (NLRDFCLKAL…NKPSDKATLL (158 aa)) form the Helicase C-terminal domain. Residues cysteine 412, cysteine 428, cysteine 432, and cysteine 435 each contribute to the Zn(2+) site. A phosphoserine mark is found at serine 489 and serine 492. Residues 491 to 621 (GSGDEGRDEA…ASKDGQLYDM (131 aa)) form an interaction with POLR2A region. 3 disordered regions span residues 518–538 (GKEA…LRDA), 679–795 (TEKL…VPGK), and 822–884 (CSLE…AREP). Residue threonine 527 is modified to Phosphothreonine. The interaction with RAD51 stretch occupies residues 653–726 (PKRVGAGFSK…APGSRTNCGD (74 aa)). At serine 728 the chain carries Phosphoserine; by CDK1. The span at 840 to 856 (TQAEKRPRPQQESQEKR) shows a compositional bias: basic and acidic residues. Residues 863–878 (PSTNSSALASDPSTEN) show a composition bias toward polar residues.

This sequence belongs to the helicase family. RecQ subfamily. In terms of assembly, monomer. Interacts with TOP2A, TOP3A and TOP3B. Interacts with RNA polymerase II subunit POLR2A. Identified in a complex with the RNA polymerase II core bound to DNA. Interacts with RAD51. Interacts with WRN; this interaction stimulates WRN helicase activity on DNA fork duplexes. Interacts with MUS1; this interaction promotes MUS81-dependent mitotic DNA synthesis. Zn(2+) is required as a cofactor. In terms of processing, phosphorylated by CDK1 at Ser-728; this phosphorylation is required for RECQL5-mediated disruption of RAD51 filaments on stalled replication forks.

It localises to the nucleus. It is found in the nucleoplasm. The catalysed reaction is Couples ATP hydrolysis with the unwinding of duplex DNA by translocating in the 3'-5' direction.. It catalyses the reaction ATP + H2O = ADP + phosphate + H(+). DNA helicase that plays an important role in DNA replication, transcription and repair. Binds to the RNA polymerase II subunit POLR2A during transcription elongation and suppresses transcription-associated genomic instability. Also associates with POLR1A and enforces the stability of ribosomal DNA arrays. Plays an important role in mitotic chromosome separation after cross-over events and cell cycle progress. Mechanistically, removes RAD51 filaments protecting stalled replication forks at common fragile sites and stimulates MUS81-EME1 endonuclease leading to mitotic DNA synthesis. Required for efficient DNA repair, including repair of inter-strand cross-links. Stimulates DNA decatenation mediated by TOP2A. Prevents sister chromatid exchange and homologous recombination. The chain is ATP-dependent DNA helicase Q5 (Recql5) from Rattus norvegicus (Rat).